The sequence spans 154 residues: Deoxyuridine 5'-triphosphate nucleotidohydrolase (154 aa).

Substrate-binding positions include Arg-72 to Gly-74, Asn-85, Leu-89 to Asp-91, and Met-99.

This sequence belongs to the dUTPase family. Mg(2+) is required as a cofactor.

It catalyses the reaction dUTP + H2O = dUMP + diphosphate + H(+). It participates in pyrimidine metabolism; dUMP biosynthesis; dUMP from dCTP (dUTP route): step 2/2. In terms of biological role, this enzyme is involved in nucleotide metabolism: it produces dUMP, the immediate precursor of thymidine nucleotides and it decreases the intracellular concentration of dUTP so that uracil cannot be incorporated into DNA. The sequence is that of Deoxyuridine 5'-triphosphate nucleotidohydrolase from Psychrobacter cryohalolentis (strain ATCC BAA-1226 / DSM 17306 / VKM B-2378 / K5).